The primary structure comprises 100 residues: MMKRLMAILTAIMPAIAMAAEGEASVAKGLLYLGAGLAIGLAGLGAGVGMGHAVRGTQEGVARNPNAGGRLQTLMFIGLAFIETIALYGLLIAFILLFVV.

The next 2 membrane-spanning stretches (helical) occupy residues 30–50 (LLYL…GVGM) and 80–100 (AFIE…LFVV).

This sequence belongs to the ATPase C chain family. As to quaternary structure, F-type ATPases have 2 components, F(1) - the catalytic core - and F(0) - the membrane proton channel. F(1) has five subunits: alpha(3), beta(3), gamma(1), delta(1), epsilon(1). F(0) has three main subunits: a(1), b(2) and c(10-14). The alpha and beta chains form an alternating ring which encloses part of the gamma chain. F(1) is attached to F(0) by a central stalk formed by the gamma and epsilon chains, while a peripheral stalk is formed by the delta and b chains.

The protein localises to the cell inner membrane. In terms of biological role, f(1)F(0) ATP synthase produces ATP from ADP in the presence of a proton or sodium gradient. F-type ATPases consist of two structural domains, F(1) containing the extramembraneous catalytic core and F(0) containing the membrane proton channel, linked together by a central stalk and a peripheral stalk. During catalysis, ATP synthesis in the catalytic domain of F(1) is coupled via a rotary mechanism of the central stalk subunits to proton translocation. Key component of the F(0) channel; it plays a direct role in translocation across the membrane. A homomeric c-ring of between 10-14 subunits forms the central stalk rotor element with the F(1) delta and epsilon subunits. This is ATP synthase subunit c from Aquifex aeolicus (strain VF5).